The chain runs to 484 residues: tRNA-2-methylthio-N(6)-dimethylallyladenosine synthase (484 aa).

One can recognise an MTTase N-terminal domain in the interval Gly-36–Glu-153. [4Fe-4S] cluster-binding residues include Cys-45, Cys-82, Cys-116, Cys-190, Cys-194, and Cys-197. The region spanning Arg-176 to Ser-415 is the Radical SAM core domain. Positions Gln-416–Leu-479 constitute a TRAM domain. A disordered region spans residues Glu-428–Phe-450.

The protein belongs to the methylthiotransferase family. MiaB subfamily. Monomer. Requires [4Fe-4S] cluster as cofactor.

It is found in the cytoplasm. It carries out the reaction N(6)-dimethylallyladenosine(37) in tRNA + (sulfur carrier)-SH + AH2 + 2 S-adenosyl-L-methionine = 2-methylsulfanyl-N(6)-dimethylallyladenosine(37) in tRNA + (sulfur carrier)-H + 5'-deoxyadenosine + L-methionine + A + S-adenosyl-L-homocysteine + 2 H(+). Functionally, catalyzes the methylthiolation of N6-(dimethylallyl)adenosine (i(6)A), leading to the formation of 2-methylthio-N6-(dimethylallyl)adenosine (ms(2)i(6)A) at position 37 in tRNAs that read codons beginning with uridine. The sequence is that of tRNA-2-methylthio-N(6)-dimethylallyladenosine synthase from Xanthomonas axonopodis pv. citri (strain 306).